The chain runs to 165 residues: Ubiquitin-conjugating enzyme E2 G2 (165 aa).

Ala2 is subject to N-acetylalanine. A UBC core domain is found at 4–164; sequence TALKRLMAEY…AKQIVQKSLG (161 aa). The Glycyl thioester intermediate role is filled by Cys89.

The protein belongs to the ubiquitin-conjugating enzyme family. In terms of assembly, interacts with AUP1 (via C-terminus); the interaction recruits UBE2G2 to lipid droplets. Interacts with ubiquitin ligases AMFR/gp78 and RNF139/TRC8; recruitment to lipid droplets by AUP1 facilitates interaction of UBE2G2 with AMFR and RNF139, leading to sterol-induced ubiquitination of 3-hydroxy-3-methylglutaryl coenzyme A reductase and its subsequent proteasomal degradation.

It is found in the endoplasmic reticulum. The protein resides in the lipid droplet. The catalysed reaction is S-ubiquitinyl-[E1 ubiquitin-activating enzyme]-L-cysteine + [E2 ubiquitin-conjugating enzyme]-L-cysteine = [E1 ubiquitin-activating enzyme]-L-cysteine + S-ubiquitinyl-[E2 ubiquitin-conjugating enzyme]-L-cysteine.. It participates in protein modification; protein ubiquitination. Functionally, accepts ubiquitin from the E1 complex and catalyzes its covalent attachment to other proteins. In vitro catalyzes 'Lys-48'-linked polyubiquitination. Involved in endoplasmic reticulum-associated degradation (ERAD). Required for sterol-induced ubiquitination of 3-hydroxy-3-methylglutaryl coenzyme A reductase and its subsequent proteasomal degradation. The sequence is that of Ubiquitin-conjugating enzyme E2 G2 from Homo sapiens (Human).